Here is a 336-residue protein sequence, read N- to C-terminus: Glucokinase (336 aa).

12-17 (ADIGGT) is an ATP binding site.

This sequence belongs to the bacterial glucokinase family.

The protein localises to the cytoplasm. It catalyses the reaction D-glucose + ATP = D-glucose 6-phosphate + ADP + H(+). The sequence is that of Glucokinase from Helicobacter pylori (strain ATCC 700392 / 26695) (Campylobacter pylori).